The following is a 184-amino-acid chain: Probable RNA 2'-phosphotransferase (184 aa).

It belongs to the KptA/TPT1 family.

Removes the 2'-phosphate from RNA via an intermediate in which the phosphate is ADP-ribosylated by NAD followed by a presumed transesterification to release the RNA and generate ADP-ribose 1''-2''-cyclic phosphate (APPR&gt;P). May function as an ADP-ribosylase. The polypeptide is Probable RNA 2'-phosphotransferase (Escherichia coli (strain 55989 / EAEC)).